Reading from the N-terminus, the 1086-residue chain is Rh5-interacting protein (1086 aa).

The N-terminal stretch at M1 to A19 is a signal peptide. N103, N144, N228, N303, N334, N480, N498, N506, N526, and N646 each carry an N-linked (GlcNAc...) asparagine glycan. EGF-like domains are found at residues R287–E321 and L325–Y362. 7 consecutive EGF-like domains span residues S636–E675, D679–V715, K719–I753, Y818–I854, S858–V897, K901–L938, and P942–V979. Residues N964 and N1021 are each glycosylated (N-linked (GlcNAc...) asparagine).

Component of the PfRH5 adhesion complex composed of 1 copy of CyRPA, RH5 and RIPR; the complex is formed during merozoite invasion of host erythrocytes specifically at the interface between the parasite and host membranes. Within the complex, interacts with CyRPA. CyRPA recruitment of RIPR to RH5-P113-BSG leads to the formation of the PfRH5 adhesion complex which probably in turn releases RH5 from P113 while maintaining the interaction of the PfRH5 adhesion complex with BSG. Post-translationally, proteolytically cleaved into two chains of 125kDa and 65kDa which remain associated. The cleavage occurs at the schizont stage prior to the release of merozoites. In terms of processing, contains disulfide bonds.

The protein resides in the secreted. Its subcellular location is the cytoplasmic vesicle. It is found in the secretory vesicle. It localises to the microneme lumen. The protein localises to the cell membrane. The protein resides in the host cell membrane. In terms of biological role, essential for the invasion of host erythrocytes by blood stage merozoites. As part of the PfRH5 adhesion complex, facilitates the interaction of RH5 and human BSG required for the Ca(2+) release into the erythrocyte. This Plasmodium falciparum (isolate 3D7) protein is Rh5-interacting protein (RIPR).